We begin with the raw amino-acid sequence, 340 residues long: Guanine nucleotide-binding protein subunit beta-4 (340 aa).

Serine 2 is modified (N-acetylserine). Serine 2 bears the Phosphoserine mark. 5 WD repeats span residues 53-92 (GHLA…KMHA), 95-134 (LRSS…GNVR), 141-179 (GHTG…QTTT), 182-221 (GHSG…CRQS), and 224-263 (GHVS…ELLL). Histidine 266 carries the phosphohistidine modification. WD repeat units follow at residues 268–307 (NIIC…RAGV) and 310–339 (GHDN…LRIW).

Belongs to the WD repeat G protein beta family. As to quaternary structure, g proteins are composed of 3 units, alpha, beta and gamma. Strongly expressed in lung and placenta, whereas it is weakly expressed in brain and heart. Abundantly expressed in the axons and Schwann cells of peripheral nerves.

Guanine nucleotide-binding proteins (G proteins) are involved as a modulator or transducer in various transmembrane signaling systems. The beta and gamma chains are required for the GTPase activity, for replacement of GDP by GTP, and for G protein-effector interaction. The sequence is that of Guanine nucleotide-binding protein subunit beta-4 (GNB4) from Homo sapiens (Human).